The following is a 314-amino-acid chain: 4-hydroxy-3-methylbut-2-enyl diphosphate reductase (314 aa).

Cys-12 is a binding site for [4Fe-4S] cluster. (2E)-4-hydroxy-3-methylbut-2-enyl diphosphate contacts are provided by His-43 and His-81. Dimethylallyl diphosphate is bound by residues His-43 and His-81. Residues His-43 and His-81 each contribute to the isopentenyl diphosphate site. Cys-103 contacts [4Fe-4S] cluster. A (2E)-4-hydroxy-3-methylbut-2-enyl diphosphate-binding site is contributed by His-131. His-131 contributes to the dimethylallyl diphosphate binding site. His-131 serves as a coordination point for isopentenyl diphosphate. Glu-133 serves as the catalytic Proton donor. Thr-170 is a (2E)-4-hydroxy-3-methylbut-2-enyl diphosphate binding site. Cys-198 provides a ligand contact to [4Fe-4S] cluster. Ser-226, Asn-228, and Ser-271 together coordinate (2E)-4-hydroxy-3-methylbut-2-enyl diphosphate. The dimethylallyl diphosphate site is built by Ser-226, Asn-228, and Ser-271. Positions 226, 228, and 271 each coordinate isopentenyl diphosphate.

Belongs to the IspH family. Requires [4Fe-4S] cluster as cofactor.

The enzyme catalyses isopentenyl diphosphate + 2 oxidized [2Fe-2S]-[ferredoxin] + H2O = (2E)-4-hydroxy-3-methylbut-2-enyl diphosphate + 2 reduced [2Fe-2S]-[ferredoxin] + 2 H(+). It catalyses the reaction dimethylallyl diphosphate + 2 oxidized [2Fe-2S]-[ferredoxin] + H2O = (2E)-4-hydroxy-3-methylbut-2-enyl diphosphate + 2 reduced [2Fe-2S]-[ferredoxin] + 2 H(+). It functions in the pathway isoprenoid biosynthesis; dimethylallyl diphosphate biosynthesis; dimethylallyl diphosphate from (2E)-4-hydroxy-3-methylbutenyl diphosphate: step 1/1. The protein operates within isoprenoid biosynthesis; isopentenyl diphosphate biosynthesis via DXP pathway; isopentenyl diphosphate from 1-deoxy-D-xylulose 5-phosphate: step 6/6. In terms of biological role, catalyzes the conversion of 1-hydroxy-2-methyl-2-(E)-butenyl 4-diphosphate (HMBPP) into a mixture of isopentenyl diphosphate (IPP) and dimethylallyl diphosphate (DMAPP). Acts in the terminal step of the DOXP/MEP pathway for isoprenoid precursor biosynthesis. The sequence is that of 4-hydroxy-3-methylbut-2-enyl diphosphate reductase from Halalkalibacterium halodurans (strain ATCC BAA-125 / DSM 18197 / FERM 7344 / JCM 9153 / C-125) (Bacillus halodurans).